We begin with the raw amino-acid sequence, 331 residues long: Adenosine deaminase (331 aa).

Histidine 12 and histidine 14 together coordinate Zn(2+). Substrate contacts are provided by histidine 14, aspartate 16, and glycine 170. Histidine 197 serves as a coordination point for Zn(2+). Glutamate 200 functions as the Proton donor in the catalytic mechanism. Aspartate 278 contacts Zn(2+). Aspartate 279 is a binding site for substrate.

This sequence belongs to the metallo-dependent hydrolases superfamily. Adenosine and AMP deaminases family. Adenosine deaminase subfamily. Zn(2+) serves as cofactor.

The enzyme catalyses adenosine + H2O + H(+) = inosine + NH4(+). It catalyses the reaction 2'-deoxyadenosine + H2O + H(+) = 2'-deoxyinosine + NH4(+). Catalyzes the hydrolytic deamination of adenosine and 2-deoxyadenosine. The chain is Adenosine deaminase from Shewanella oneidensis (strain ATCC 700550 / JCM 31522 / CIP 106686 / LMG 19005 / NCIMB 14063 / MR-1).